Here is a 631-residue protein sequence, read N- to C-terminus: UvrABC system protein C (631 aa).

The segment at 1–20 is disordered; the sequence is MKNETEAVADQPPKTGPVKP. Residues 34–112 form the GIY-YIG domain; that stretch reads MSPGVYRMLD…IKQLKPKFNV (79 aa). The UVR domain maps to 222–257; sequence TDLQRQLADGMAAASEAMEFERAAALRDRIRALTNV.

Belongs to the UvrC family. In terms of assembly, interacts with UvrB in an incision complex.

The protein resides in the cytoplasm. The UvrABC repair system catalyzes the recognition and processing of DNA lesions. UvrC both incises the 5' and 3' sides of the lesion. The N-terminal half is responsible for the 3' incision and the C-terminal half is responsible for the 5' incision. This is UvrABC system protein C from Jannaschia sp. (strain CCS1).